Consider the following 273-residue polypeptide: Orotidine 5'-phosphate decarboxylase (273 aa).

Lysine 97 serves as the catalytic Proton donor.

It belongs to the OMP decarboxylase family. Type 2 subfamily.

It catalyses the reaction orotidine 5'-phosphate + H(+) = UMP + CO2. It functions in the pathway pyrimidine metabolism; UMP biosynthesis via de novo pathway; UMP from orotate: step 2/2. This Cellvibrio japonicus (strain Ueda107) (Pseudomonas fluorescens subsp. cellulosa) protein is Orotidine 5'-phosphate decarboxylase.